A 230-amino-acid polypeptide reads, in one-letter code: Large ribosomal subunit protein uL1 (230 aa).

The protein belongs to the universal ribosomal protein uL1 family. Part of the 50S ribosomal subunit.

Functionally, binds directly to 23S rRNA. The L1 stalk is quite mobile in the ribosome, and is involved in E site tRNA release. Protein L1 is also a translational repressor protein, it controls the translation of the L11 operon by binding to its mRNA. The sequence is that of Large ribosomal subunit protein uL1 from Lactobacillus gasseri (strain ATCC 33323 / DSM 20243 / BCRC 14619 / CIP 102991 / JCM 1131 / KCTC 3163 / NCIMB 11718 / NCTC 13722 / AM63).